Reading from the N-terminus, the 473-residue chain is Photosystem II CP43 reaction center protein (473 aa).

Residues 1–14 (MKTLYSLRRFYPVE) constitute a propeptide that is removed on maturation. Thr-15 carries the N-acetylthreonine modification. A Phosphothreonine modification is found at Thr-15. 5 helical membrane passes run 69–93 (LFEVAHFVPEKPMYEQGLILLPHLA), 134–155 (LLGPETLEESFPFFGYVWKDRN), 178–200 (KALYFGGVYDTWAPGGGDVRKIT), 255–275 (KPFAWARRALVWSGEAYLSYS), and 291–312 (WFNNTAYPSEFYGPTGPEASQA). Glu-367 contributes to the [CaMn4O5] cluster binding site. A helical transmembrane segment spans residues 447–471 (RARAAAAGFEKGIDRDFEPVLSMTP).

Belongs to the PsbB/PsbC family. PsbC subfamily. In terms of assembly, PSII is composed of 1 copy each of membrane proteins PsbA, PsbB, PsbC, PsbD, PsbE, PsbF, PsbH, PsbI, PsbJ, PsbK, PsbL, PsbM, PsbT, PsbX, PsbY, PsbZ, Psb30/Ycf12, at least 3 peripheral proteins of the oxygen-evolving complex and a large number of cofactors. It forms dimeric complexes. Binds multiple chlorophylls and provides some of the ligands for the Ca-4Mn-5O cluster of the oxygen-evolving complex. It may also provide a ligand for a Cl- that is required for oxygen evolution. PSII binds additional chlorophylls, carotenoids and specific lipids. is required as a cofactor.

The protein resides in the plastid. It localises to the chloroplast thylakoid membrane. Functionally, one of the components of the core complex of photosystem II (PSII). It binds chlorophyll and helps catalyze the primary light-induced photochemical processes of PSII. PSII is a light-driven water:plastoquinone oxidoreductase, using light energy to abstract electrons from H(2)O, generating O(2) and a proton gradient subsequently used for ATP formation. This Populus trichocarpa (Western balsam poplar) protein is Photosystem II CP43 reaction center protein.